Reading from the N-terminus, the 209-residue chain is High mobility group protein B2 (209 aa).

Position 3 is an N6-acetyllysine (Lys-3). Positions 9–79 (PRGKMSSYAF…RYDREMKNYV (71 aa)) form a DNA-binding region, HMG box 1. Cys-23 bears the Cysteine sulfonic acid (-SO3H); alternate mark. Cys-23 and Cys-45 are joined by a disulfide. Lys-30 carries the post-translational modification N6-acetyllysine. Ser-35 is subject to Phosphoserine. Lys-43 is modified (N6-acetyllysine). Cysteine sulfonic acid (-SO3H); alternate is present on Cys-45. Positions 52–76 (MSAKEKSKFEDMAKSDKARYDREMK) are enriched in basic and acidic residues. Disordered regions lie at residues 52–150 (MSAK…KAAK) and 162–209 (YRAK…EDEE). Lys-90 carries the N6-acetyllysine modification. A DNA-binding region (HMG box 2) is located at residues 95 to 163 (PKRPPSAFFL…KYEKDIAAYR (69 aa)). At Ser-100 the chain carries Phosphoserine. Cys-106 is subject to Cysteine sulfonic acid (-SO3H). 3 stretches are compositionally biased toward basic and acidic residues: residues 107-117 (SEHRPKIKSEH), 137-150 (SAKDKQPYEQKAAK), and 162-172 (YRAKGKSEAGK). N6-acetyllysine occurs at positions 114 and 141. The required for chemotactic activity stretch occupies residues 165–180 (KGKSEAGKKGPGRPTG). Positions 187-209 (PEDEEEEEEEEDEDEEEEDEDEE) are enriched in acidic residues.

Belongs to the HMGB family. As to quaternary structure, interacts with POU2F2, POU2F1 and POU3F1. Component of the RAG complex composed of core components RAG1 and RAG2, and associated component HMGB1 or HMGB2. Component of the SET complex, composed of at least ANP32A, APEX1, HMGB2, NME1, SET and TREX1. Directly interacts with SET. Interacts with LEF1. Reduction/oxidation of cysteine residues Cys-23, Cys-45 and Cys-106 and a possible intramolecular disulfide bond involving Cys-23 and Cys-45 give rise to different redox forms with specific functional activities in various cellular compartments: 1- fully reduced HMGB2 (HMGB2C23hC45hC106h), 2- disulfide HMGB2 (HMGB2C23-C45C106h) and 3- sulfonyl HMGB2 (HMGB2C23soC45soC106so).

Its subcellular location is the nucleus. It is found in the chromosome. The protein resides in the cytoplasm. It localises to the secreted. Its function is as follows. Multifunctional protein with various roles in different cellular compartments. May act in a redox sensitive manner. In the nucleus is an abundant chromatin-associated non-histone protein involved in transcription, chromatin remodeling and V(D)J recombination and probably other processes. Binds DNA with a preference to non-canonical DNA structures such as single-stranded DNA. Can bent DNA and enhance DNA flexibility by looping thus providing a mechanism to promote activities on various gene promoters by enhancing transcription factor binding and/or bringing distant regulatory sequences into close proximity. Involved in V(D)J recombination by acting as a cofactor of the RAG complex: acts by stimulating cleavage and RAG protein binding at the 23 bp spacer of conserved recombination signal sequences (RSS). Proposed to be involved in the innate immune response to nucleic acids by acting as a cytoplasmic promiscuous immunogenic DNA/RNA sensor which cooperates with subsequent discriminative sensing by specific pattern recognition receptors. In the extracellular compartment acts as a chemokine. Promotes proliferation and migration of endothelial cells implicating AGER/RAGE. Has antimicrobial activity in gastrointestinal epithelial tissues. Involved in inflammatory response to antigenic stimulus coupled with pro-inflammatory activity. May play a role in germ cell differentiation. Involved in modulation of neurogenesis probably by regulation of neural stem proliferation. Involved in articular cartilage surface maintenance implicating LEF1 and the Wnt/beta-catenin pathway. This is High mobility group protein B2 (HMGB2) from Bos taurus (Bovine).